Reading from the N-terminus, the 105-residue chain is MKLVFIFATAAIMGVVVYGQGRDAGDRGKRSLSDDFISTLQELKEAMDDLPSIYAIINKHGVNICEPCSRLCDNVADTHVVCKRCRRCIGRGGIHGAVAFGMRDE.

Residues 1 to 19 (MKLVFIFATAAIMGVVVYG) form the signal peptide.

This is an uncharacterized protein from Magallana gigas (Pacific oyster).